Consider the following 523-residue polypeptide: 2-isopropylmalate synthase (523 aa).

A Pyruvate carboxyltransferase domain is found at 5–267 (VIIFDTTLRD…HTNINHHEIW (263 aa)). Mn(2+) contacts are provided by Asp-14, His-202, His-204, and Asn-238. The regulatory domain stretch occupies residues 392 to 523 (RLDYFSVQSG…QNKENNKETV (132 aa)).

Belongs to the alpha-IPM synthase/homocitrate synthase family. LeuA type 1 subfamily. As to quaternary structure, homodimer. The cofactor is Mn(2+).

It localises to the cytoplasm. It carries out the reaction 3-methyl-2-oxobutanoate + acetyl-CoA + H2O = (2S)-2-isopropylmalate + CoA + H(+). It functions in the pathway amino-acid biosynthesis; L-leucine biosynthesis; L-leucine from 3-methyl-2-oxobutanoate: step 1/4. In terms of biological role, catalyzes the condensation of the acetyl group of acetyl-CoA with 3-methyl-2-oxobutanoate (2-ketoisovalerate) to form 3-carboxy-3-hydroxy-4-methylpentanoate (2-isopropylmalate). The polypeptide is 2-isopropylmalate synthase (Salmonella choleraesuis (strain SC-B67)).